The primary structure comprises 349 residues: MKKQHIINETFLDEILAQKLGTTYIPPTGIKDADFEQAAKHFINLLLRADGLKPIKTAVVHPIDKESLLGAVRAAQFNVIKPVLIGPQHKIESVAKVNDVDLENYQVINAEHSHEAAKKAVELAKKREVSAIMKGALHTDELMSAVVYKENGLRTERRISHAFLMAVATFPKPFIITDAAINIRPTLEDKRDIVQNAIDLMHMIKEDKQVRVAVLSAVETVTSAIPTTLDAAALSKMADRGQIMNAIVDGPLAFDNAISLFAAEAKGINSPVSGNADILVAPDLESGNLLAKQLKYLGQAVMAGIVLGARVPIILTSRADPIDMRVISCVLASFIYNQTKAKLHIQASQ.

Belongs to the phosphate acetyltransferase and butyryltransferase family.

It localises to the cytoplasm. The enzyme catalyses acetyl-CoA + phosphate = acetyl phosphate + CoA. It participates in metabolic intermediate biosynthesis; acetyl-CoA biosynthesis; acetyl-CoA from acetate: step 2/2. The protein is Phosphate acetyltransferase (pta) of Rickettsia typhi (strain ATCC VR-144 / Wilmington).